Here is a 175-residue protein sequence, read N- to C-terminus: ATP synthase subunit d, mitochondrial (175 aa).

Residue S2 is modified to N-acetylserine.

Belongs to the ATPase d subunit family.

Its subcellular location is the mitochondrion inner membrane. Its function is as follows. Mitochondrial membrane ATP synthase (F(1)F(0) ATP synthase or Complex V) produces ATP from ADP in the presence of a proton gradient across the membrane which is generated by electron transport complexes of the respiratory chain. F-type ATPases consist of two structural domains, F(1) - containing the extramembraneous catalytic core, and F(0) - containing the membrane proton channel, linked together by a central stalk and a peripheral stalk. During catalysis, ATP synthesis in the catalytic domain of F(1) is coupled via a rotary mechanism of the central stalk subunits to proton translocation. Part of the complex F(0) domain and the peripheric stalk, which acts as a stator to hold the catalytic alpha(3)beta(3) subcomplex and subunit a/ATP6 static relative to the rotary elements. This Schizosaccharomyces pombe (strain 972 / ATCC 24843) (Fission yeast) protein is ATP synthase subunit d, mitochondrial (atp7).